We begin with the raw amino-acid sequence, 341 residues long: UDP-N-acetylenolpyruvoylglucosamine reductase (341 aa).

The FAD-binding PCMH-type domain maps to 13–185 (FGVEQSCLSM…TAVGLRLPKA (173 aa)). R161 is an active-site residue. The active-site Proton donor is the S231. E327 is a catalytic residue.

The protein belongs to the MurB family. The cofactor is FAD.

It localises to the cytoplasm. It catalyses the reaction UDP-N-acetyl-alpha-D-muramate + NADP(+) = UDP-N-acetyl-3-O-(1-carboxyvinyl)-alpha-D-glucosamine + NADPH + H(+). The protein operates within cell wall biogenesis; peptidoglycan biosynthesis. Functionally, cell wall formation. The protein is UDP-N-acetylenolpyruvoylglucosamine reductase of Shewanella sp. (strain MR-7).